A 269-amino-acid chain; its full sequence is 4-hydroxy-tetrahydrodipicolinate reductase (269 aa).

NAD(+)-binding positions include 11 to 16 and E37; that span reads GASGRM. Residue R38 coordinates NADP(+). NAD(+) contacts are provided by residues 101-103 and 125-128; these read GTT and AGNM. The active-site Proton donor/acceptor is H158. Residue H159 coordinates (S)-2,3,4,5-tetrahydrodipicolinate. The Proton donor role is filled by K162. Residue 168-169 coordinates (S)-2,3,4,5-tetrahydrodipicolinate; sequence GT.

The protein belongs to the DapB family.

The protein resides in the cytoplasm. It carries out the reaction (S)-2,3,4,5-tetrahydrodipicolinate + NAD(+) + H2O = (2S,4S)-4-hydroxy-2,3,4,5-tetrahydrodipicolinate + NADH + H(+). The catalysed reaction is (S)-2,3,4,5-tetrahydrodipicolinate + NADP(+) + H2O = (2S,4S)-4-hydroxy-2,3,4,5-tetrahydrodipicolinate + NADPH + H(+). Its pathway is amino-acid biosynthesis; L-lysine biosynthesis via DAP pathway; (S)-tetrahydrodipicolinate from L-aspartate: step 4/4. Catalyzes the conversion of 4-hydroxy-tetrahydrodipicolinate (HTPA) to tetrahydrodipicolinate. The sequence is that of 4-hydroxy-tetrahydrodipicolinate reductase from Ruegeria pomeroyi (strain ATCC 700808 / DSM 15171 / DSS-3) (Silicibacter pomeroyi).